The chain runs to 403 residues: Phosphopentomutase (403 aa).

The Mn(2+) site is built by aspartate 13, aspartate 298, histidine 303, aspartate 339, histidine 340, and histidine 351.

The protein belongs to the phosphopentomutase family. Mn(2+) serves as cofactor.

The protein localises to the cytoplasm. The enzyme catalyses 2-deoxy-alpha-D-ribose 1-phosphate = 2-deoxy-D-ribose 5-phosphate. It catalyses the reaction alpha-D-ribose 1-phosphate = D-ribose 5-phosphate. It participates in carbohydrate degradation; 2-deoxy-D-ribose 1-phosphate degradation; D-glyceraldehyde 3-phosphate and acetaldehyde from 2-deoxy-alpha-D-ribose 1-phosphate: step 1/2. Isomerase that catalyzes the conversion of deoxy-ribose 1-phosphate (dRib-1-P) and ribose 1-phosphate (Rib-1-P) to deoxy-ribose 5-phosphate (dRib-5-P) and ribose 5-phosphate (Rib-5-P), respectively. The polypeptide is Phosphopentomutase (Streptococcus mutans serotype c (strain ATCC 700610 / UA159)).